The chain runs to 216 residues: Thiopurine S-methyltransferase (216 aa).

Positions 11, 46, 67, and 122 each coordinate S-adenosyl-L-methionine.

This sequence belongs to the class I-like SAM-binding methyltransferase superfamily. TPMT family.

Its subcellular location is the cytoplasm. The enzyme catalyses S-adenosyl-L-methionine + a thiopurine = S-adenosyl-L-homocysteine + a thiopurine S-methylether.. This is Thiopurine S-methyltransferase from Vibrio campbellii (strain ATCC BAA-1116).